Here is a 109-residue protein sequence, read N- to C-terminus: uncharacterized protein (109 aa).

This is an uncharacterized protein from Saccharomyces cerevisiae (strain ATCC 204508 / S288c) (Baker's yeast).